A 305-amino-acid polypeptide reads, in one-letter code: Homoserine O-succinyltransferase (305 aa).

The active-site Acyl-thioester intermediate is Cys142. Residues Lys163 and Ser192 each coordinate substrate. The active-site Proton acceptor is His235. Glu237 is a catalytic residue. Substrate is bound at residue Arg249.

Belongs to the MetA family.

Its subcellular location is the cytoplasm. The catalysed reaction is L-homoserine + succinyl-CoA = O-succinyl-L-homoserine + CoA. It functions in the pathway amino-acid biosynthesis; L-methionine biosynthesis via de novo pathway; O-succinyl-L-homoserine from L-homoserine: step 1/1. Transfers a succinyl group from succinyl-CoA to L-homoserine, forming succinyl-L-homoserine. The polypeptide is Homoserine O-succinyltransferase (Psychromonas ingrahamii (strain DSM 17664 / CCUG 51855 / 37)).